A 764-amino-acid chain; its full sequence is Thyrotropin receptor (764 aa).

An N-terminal signal peptide occupies residues 1 to 21; it reads MRPTPLLRLALLLVLPSSLWG. Topologically, residues 22–413 are extracellular; it reads ERCPSPPCEC…EFNPCEDIMG (392 aa). The cysteines at positions 31 and 41 are disulfide-linked. The LRR 1 repeat unit spans residues 51–74; it reads PPSTQTLKFIETHLKTIPSRAFSN. 2 N-linked (GlcNAc...) asparagine glycosylation sites follow: N77 and N99. LRR repeat units follow at residues 125–150, 152–174, 176–199, 201–223, and 225–248; these read LPLL…IYST, VFFI…AFQG, SNET…AFNG, KLDA…AFAG, and YSGP…GLEH. 2 N-linked (GlcNAc...) asparagine glycosylation sites follow: N177 and N198. N-linked (GlcNAc...) asparagine glycosylation occurs at N302. Position 385 is a sulfotyrosine (Y385). Residues 414–441 form a helical membrane-spanning segment; that stretch reads YKFLRIVVWFVSLLALLGNVFVLVILLT. Residues 442 to 450 lie on the Cytoplasmic side of the membrane; sequence SHYKLTVPR. A helical transmembrane segment spans residues 451-473; sequence FLMCNLAFADFCMGLYLLLIASV. The Extracellular segment spans residues 474 to 494; the sequence is DLYTQSEYYNHAIDWQTGPGC. A disulfide bond links C494 and C569. A helical transmembrane segment spans residues 495–517; the sequence is NTAGFFTVFASELSVYTLTVITL. At 518-537 the chain is on the cytoplasmic side; sequence ERWYAITFAMHLDRKIRLWH. The helical transmembrane segment at 538 to 560 threads the bilayer; the sequence is AYVIMLGGWVCCFLLALLPLVGI. At 561–580 the chain is on the extracellular side; sequence SSYAKVSICLPMDTETPLAL. Residues 581–602 traverse the membrane as a helical segment; sequence AYIILVLLLNIIAFIIVCACYV. Over 603-625 the chain is Cytoplasmic; it reads KIYITVRNPHYNPGDKDTRIAKR. The chain crosses the membrane as a helical span at residues 626–649; it reads MAVLIFTDFMCMAPISFYALSALM. Topologically, residues 650–660 are extracellular; that stretch reads NKPLITVTNSK. A helical transmembrane segment spans residues 661 to 682; sequence ILLVLFYPLNSCANPFLYAIFT. The Cytoplasmic portion of the chain corresponds to 683–764; the sequence is KAFQRDVFML…TSKEYKQTVL (82 aa). The short motif at 762-764 is the PDZ-binding element; sequence TVL.

It belongs to the G-protein coupled receptor 1 family. FSH/LSH/TSH subfamily. Interacts with heterodimer GPHA2:GPHB5; this interaction stimulates cAMP production. Interacts (via the PDZ-binding motif) with SCRIB; regulates TSHR trafficking and function. In terms of processing, glycosylated. Sulfated. Sulfation on Tyr-385 plays a role in thyrotropin receptor binding and activation.

It is found in the cell membrane. It localises to the basolateral cell membrane. In terms of biological role, receptor for the thyroid-stimulating hormone (TSH) or thyrotropin. Also acts as a receptor for the heterodimeric glycoprotein hormone (GPHA2:GPHB5) or thyrostimulin. The activity of this receptor is mediated by G proteins which activate adenylate cyclase. Plays a central role in controlling thyroid cell metabolism. The polypeptide is Thyrotropin receptor (TSHR) (Ovis aries (Sheep)).